Reading from the N-terminus, the 453-residue chain is Cytochrome b-c1 complex subunit 2, mitochondrial (453 aa).

A mitochondrion-targeting transit peptide spans M1–Y14. An N6-acetyllysine mark is found at K66, K199, and K250. The residue at position 368 (S368) is a Phosphoserine.

It belongs to the peptidase M16 family. UQCRC2/QCR2 subfamily. As to quaternary structure, component of the ubiquinol-cytochrome c oxidoreductase (cytochrome b-c1 complex, complex III, CIII), a multisubunit enzyme composed of 11 subunits. The complex is composed of 3 respiratory subunits cytochrome b, cytochrome c1 and Rieske protein UQCRFS1, 2 core protein subunits UQCRC1/QCR1 and UQCRC2/QCR2, and 6 low-molecular weight protein subunits UQCRH/QCR6, UQCRB/QCR7, UQCRQ/QCR8, UQCR10/QCR9, UQCR11/QCR10 and subunit 9, the cleavage product of Rieske protein UQCRFS1. The complex exists as an obligatory dimer and forms supercomplexes (SCs) in the inner mitochondrial membrane with NADH-ubiquinone oxidoreductase (complex I, CI) and cytochrome c oxidase (complex IV, CIV), resulting in different assemblies (supercomplex SCI(1)III(2)IV(1) and megacomplex MCI(2)III(2)IV(2)). Interacts with RAB5IF. Interacts with STMP1. Post-translationally, acetylation of Lys-159 and Lys-250 is observed in liver mitochondria from fasted mice but not from fed mice. In terms of tissue distribution, expressed in neurons and astrocytes of the cerebral cortex and hippocampus (at protein level).

The protein localises to the mitochondrion inner membrane. Functionally, component of the ubiquinol-cytochrome c oxidoreductase, a multisubunit transmembrane complex that is part of the mitochondrial electron transport chain which drives oxidative phosphorylation. The respiratory chain contains 3 multisubunit complexes succinate dehydrogenase (complex II, CII), ubiquinol-cytochrome c oxidoreductase (cytochrome b-c1 complex, complex III, CIII) and cytochrome c oxidase (complex IV, CIV), that cooperate to transfer electrons derived from NADH and succinate to molecular oxygen, creating an electrochemical gradient over the inner membrane that drives transmembrane transport and the ATP synthase. The cytochrome b-c1 complex catalyzes electron transfer from ubiquinol to cytochrome c, linking this redox reaction to translocation of protons across the mitochondrial inner membrane, with protons being carried across the membrane as hydrogens on the quinol. In the process called Q cycle, 2 protons are consumed from the matrix, 4 protons are released into the intermembrane space and 2 electrons are passed to cytochrome c. The 2 core subunits UQCRC1/QCR1 and UQCRC2/QCR2 are homologous to the 2 mitochondrial-processing peptidase (MPP) subunits beta-MPP and alpha-MPP respectively, and they seem to have preserved their MPP processing properties. May be involved in the in situ processing of UQCRFS1 into the mature Rieske protein and its mitochondrial targeting sequence (MTS)/subunit 9 when incorporated into complex III. The chain is Cytochrome b-c1 complex subunit 2, mitochondrial (Uqcrc2) from Mus musculus (Mouse).